The following is a 329-amino-acid chain: Mitochondrial nuclease (329 aa).

His138 acts as the Proton acceptor in catalysis. Asn170 lines the Mg(2+) pocket.

The protein belongs to the DNA/RNA non-specific endonuclease family. In terms of assembly, homodimer. Mn(2+) is required as a cofactor. It depends on Mg(2+) as a cofactor.

It localises to the mitochondrion inner membrane. This enzyme has both RNase and DNase activity. This chain is Mitochondrial nuclease (NUC1), found in Saccharomyces cerevisiae (strain ATCC 204508 / S288c) (Baker's yeast).